Consider the following 268-residue polypeptide: 4-hydroxy-tetrahydrodipicolinate reductase (268 aa).

Residues 9 to 14 (GVCGRM), Glu-35, 99 to 101 (GTT), and 123 to 126 (APNY) contribute to the NAD(+) site. His-156 functions as the Proton donor/acceptor in the catalytic mechanism. His-157 contributes to the (S)-2,3,4,5-tetrahydrodipicolinate binding site. The active-site Proton donor is the Lys-160. A (S)-2,3,4,5-tetrahydrodipicolinate-binding site is contributed by 166–167 (GT).

This sequence belongs to the DapB family.

Its subcellular location is the cytoplasm. The enzyme catalyses (S)-2,3,4,5-tetrahydrodipicolinate + NAD(+) + H2O = (2S,4S)-4-hydroxy-2,3,4,5-tetrahydrodipicolinate + NADH + H(+). It carries out the reaction (S)-2,3,4,5-tetrahydrodipicolinate + NADP(+) + H2O = (2S,4S)-4-hydroxy-2,3,4,5-tetrahydrodipicolinate + NADPH + H(+). It functions in the pathway amino-acid biosynthesis; L-lysine biosynthesis via DAP pathway; (S)-tetrahydrodipicolinate from L-aspartate: step 4/4. Catalyzes the conversion of 4-hydroxy-tetrahydrodipicolinate (HTPA) to tetrahydrodipicolinate. The chain is 4-hydroxy-tetrahydrodipicolinate reductase from Magnetococcus marinus (strain ATCC BAA-1437 / JCM 17883 / MC-1).